We begin with the raw amino-acid sequence, 434 residues long: Alpha-enolase (434 aa).

At S2 the chain carries N-acetylserine. K5 bears the N6-acetyllysine mark. Position 27 is a phosphoserine (S27). An epitope recognized by CAR and healthy patient antibodies region spans residues 31–38; the sequence is FRAAVPSG. S40 serves as a coordination point for Mg(2+). Y44 carries the phosphotyrosine modification. Positions 56–63 are epitope recognized by CAR antibodies; sequence RYMGKGVS. K60 carries the post-translational modification N6-acetyllysine; alternate. K60 carries the N6-succinyllysine; alternate modification. N6-acetyllysine is present on residues K64 and K71. At K89 the chain carries N6-acetyllysine; alternate. K89 is subject to N6-succinyllysine; alternate. An N6-acetyllysine mark is found at K92 and K126. Residues 97–237 are required for repression of c-myc promoter activity; the sequence is MDGTENKSKF…KTAIGKAGYT (141 aa). Residues H158 and E167 each coordinate substrate. K193 and K199 each carry N6-acetyllysine. Position 202 is an N6-acetyllysine; alternate (K202). K202 participates in a covalent cross-link: Glycyl lysine isopeptide (Lys-Gly) (interchain with G-Cter in SUMO2); alternate. The active-site Proton donor is E210. An N6-acetyllysine; alternate mark is found at K228 and K233. N6-succinyllysine; alternate is present on K228. An N6-(2-hydroxyisobutyryl)lysine; alternate modification is found at K228. K233 is modified (N6-malonyllysine; alternate). D245 is a Mg(2+) binding site. S254 carries the phosphoserine modification. K256 carries the post-translational modification N6-acetyllysine. S263 and S272 each carry phosphoserine. K281 carries the N6-acetyllysine; alternate modification. K281 carries the N6-(2-hydroxyisobutyryl)lysine; alternate modification. K285 is subject to N6-acetyllysine. At Y287 the chain carries Phosphotyrosine. The residue at position 291 (S291) is a Phosphoserine. E293 and D318 together coordinate Mg(2+). E293 and D318 together coordinate substrate. Residues K335 and K343 each carry the N6-acetyllysine modification. Residue K343 is the Proton acceptor of the active site. Substrate contacts are provided by residues 370 to 373 and K394; that span reads SHRS. Residues 405-434 are required for interaction with PLG; it reads AKYNQLLRIEEELGSKAKFAGRNFRNPLAK. K406 is modified (N6-acetyllysine). N6-acetyllysine; alternate is present on K420. N6-succinyllysine; alternate is present on K420. K420 carries the N6-malonyllysine; alternate modification.

The protein belongs to the enolase family. As to quaternary structure, mammalian enolase is composed of 3 isozyme subunits, alpha, beta and gamma, which can form homodimers or heterodimers which are cell-type and development-specific. ENO1 interacts with PLG in the neuronal plasma membrane and promotes its activation. The C-terminal lysine is required for this binding. Isoform MBP-1 interacts with TRAPPC2B. Interacts with ENO4 and PGAM2. Interacts with CMTM6. It depends on Mg(2+) as a cofactor. Post-translationally, ISGylated. In terms of processing, lysine 2-hydroxyisobutyrylation (Khib) by p300/EP300 activates the phosphopyruvate hydratase activity. As to expression, the alpha/alpha homodimer is expressed in embryo and in most adult tissues. The alpha/beta heterodimer and the beta/beta homodimer are found in striated muscle, and the alpha/gamma heterodimer and the gamma/gamma homodimer in neurons.

Its subcellular location is the cytoplasm. The protein localises to the cell membrane. It is found in the myofibril. It localises to the sarcomere. The protein resides in the m line. Its subcellular location is the nucleus. It catalyses the reaction (2R)-2-phosphoglycerate = phosphoenolpyruvate + H2O. Its pathway is carbohydrate degradation; glycolysis; pyruvate from D-glyceraldehyde 3-phosphate: step 4/5. Functionally, glycolytic enzyme the catalyzes the conversion of 2-phosphoglycerate to phosphoenolpyruvate. In addition to glycolysis, involved in various processes such as growth control, hypoxia tolerance and allergic responses. May also function in the intravascular and pericellular fibrinolytic system due to its ability to serve as a receptor and activator of plasminogen on the cell surface of several cell-types such as leukocytes and neurons. Stimulates immunoglobulin production. Its function is as follows. Binds to the myc promoter and acts as a transcriptional repressor. May be a tumor suppressor. The chain is Alpha-enolase (ENO1) from Homo sapiens (Human).